The primary structure comprises 341 residues: Phosphoribosylformylglycinamidine cyclo-ligase (341 aa).

It belongs to the AIR synthase family.

It localises to the cytoplasm. It carries out the reaction 2-formamido-N(1)-(5-O-phospho-beta-D-ribosyl)acetamidine + ATP = 5-amino-1-(5-phospho-beta-D-ribosyl)imidazole + ADP + phosphate + H(+). It functions in the pathway purine metabolism; IMP biosynthesis via de novo pathway; 5-amino-1-(5-phospho-D-ribosyl)imidazole from N(2)-formyl-N(1)-(5-phospho-D-ribosyl)glycinamide: step 2/2. The protein is Phosphoribosylformylglycinamidine cyclo-ligase of Xanthomonas campestris pv. campestris (strain 8004).